A 104-amino-acid chain; its full sequence is Co-chaperonin GroES (104 aa).

It belongs to the GroES chaperonin family. As to quaternary structure, heptamer of 7 subunits arranged in a ring. Interacts with the chaperonin GroEL.

Its subcellular location is the cytoplasm. In terms of biological role, together with the chaperonin GroEL, plays an essential role in assisting protein folding. The GroEL-GroES system forms a nano-cage that allows encapsulation of the non-native substrate proteins and provides a physical environment optimized to promote and accelerate protein folding. GroES binds to the apical surface of the GroEL ring, thereby capping the opening of the GroEL channel. In Acidiphilium cryptum (strain JF-5), this protein is Co-chaperonin GroES.